We begin with the raw amino-acid sequence, 322 residues long: Sideroflexin-2 (322 aa).

Residue Met1 is modified to N-acetylmethionine. Helical transmembrane passes span 100–122, 142–164, 174–192, 228–250, and 265–287; these read MIIT…WQWV, SVRQ…AVGM, LVGR…CVNI, VVIS…MERL, and PLQV…GLFP.

Belongs to the sideroflexin family. Widely expressed, highest levels in kidney, liver, and pancreas.

Its subcellular location is the mitochondrion inner membrane. It localises to the mitochondrion outer membrane. It catalyses the reaction L-serine(in) = L-serine(out). Mitochondrial amino-acid transporter that mediates transport of serine into mitochondria. Involved in mitochondrial iron homeostasis by regulating heme biosynthesis. The protein is Sideroflexin-2 of Homo sapiens (Human).